The primary structure comprises 137 residues: Putative pre-16S rRNA nuclease (137 aa).

Belongs to the YqgF nuclease family.

It is found in the cytoplasm. In terms of biological role, could be a nuclease involved in processing of the 5'-end of pre-16S rRNA. The chain is Putative pre-16S rRNA nuclease from Anaeromyxobacter sp. (strain K).